Reading from the N-terminus, the 372-residue chain is N-methyl-L-tryptophan oxidase (372 aa).

4–34 (DLIIIGSGSVGAAAGYYATRAGLNVLMTDAH) provides a ligand contact to FAD. C308 is subject to S-8alpha-FAD cysteine.

It belongs to the MSOX/MTOX family. MTOX subfamily. Monomer. The cofactor is FAD.

It catalyses the reaction N(alpha)-methyl-L-tryptophan + O2 + H2O = L-tryptophan + formaldehyde + H2O2. Its function is as follows. Catalyzes the oxidative demethylation of N-methyl-L-tryptophan. The sequence is that of N-methyl-L-tryptophan oxidase from Shigella flexneri serotype 5b (strain 8401).